A 242-amino-acid polypeptide reads, in one-letter code: Biosynthetic peptidoglycan transglycosylase (242 aa).

A helical membrane pass occupies residues 19 to 39; the sequence is ILAALAVFWGGGIALFSVVPV.

Belongs to the glycosyltransferase 51 family.

It localises to the cell inner membrane. The enzyme catalyses [GlcNAc-(1-&gt;4)-Mur2Ac(oyl-L-Ala-gamma-D-Glu-L-Lys-D-Ala-D-Ala)](n)-di-trans,octa-cis-undecaprenyl diphosphate + beta-D-GlcNAc-(1-&gt;4)-Mur2Ac(oyl-L-Ala-gamma-D-Glu-L-Lys-D-Ala-D-Ala)-di-trans,octa-cis-undecaprenyl diphosphate = [GlcNAc-(1-&gt;4)-Mur2Ac(oyl-L-Ala-gamma-D-Glu-L-Lys-D-Ala-D-Ala)](n+1)-di-trans,octa-cis-undecaprenyl diphosphate + di-trans,octa-cis-undecaprenyl diphosphate + H(+). It functions in the pathway cell wall biogenesis; peptidoglycan biosynthesis. Functionally, peptidoglycan polymerase that catalyzes glycan chain elongation from lipid-linked precursors. The protein is Biosynthetic peptidoglycan transglycosylase of Salmonella paratyphi A (strain ATCC 9150 / SARB42).